The primary structure comprises 30 residues: Conopeptide Vi002 (30 aa).

Expressed by the venom gland.

It is found in the secreted. This Conus virgo (Virgin cone) protein is Conopeptide Vi002.